The chain runs to 682 residues: Potassium-transporting ATPase ATP-binding subunit (682 aa).

Helical transmembrane passes span P34–A54, A62–A82, I219–L239, and V254–I274. D307 acts as the 4-aspartylphosphate intermediate in catalysis. ATP-binding positions include D344, E348, F377 to S384, and K395. Positions 518 and 522 each coordinate Mg(2+). The next 3 helical transmembrane spans lie at F588 to M608, A616 to L636, and I656 to L676.

Belongs to the cation transport ATPase (P-type) (TC 3.A.3) family. Type IA subfamily. In terms of assembly, the system is composed of three essential subunits: KdpA, KdpB and KdpC.

Its subcellular location is the cell inner membrane. The enzyme catalyses K(+)(out) + ATP + H2O = K(+)(in) + ADP + phosphate + H(+). Its function is as follows. Part of the high-affinity ATP-driven potassium transport (or Kdp) system, which catalyzes the hydrolysis of ATP coupled with the electrogenic transport of potassium into the cytoplasm. This subunit is responsible for energy coupling to the transport system and for the release of the potassium ions to the cytoplasm. This chain is Potassium-transporting ATPase ATP-binding subunit, found in Shigella boydii serotype 18 (strain CDC 3083-94 / BS512).